The chain runs to 609 residues: UvrABC system protein C (609 aa).

Positions 16 to 94 (SSAGVYRMYD…IKQYMPKYNV (79 aa)) constitute a GIY-YIG domain. One can recognise a UVR domain in the interval 203–238 (KQVISELVAKMEEAAGQQAYEQAARFRDQIMALRRV).

Belongs to the UvrC family. In terms of assembly, interacts with UvrB in an incision complex.

Its subcellular location is the cytoplasm. Functionally, the UvrABC repair system catalyzes the recognition and processing of DNA lesions. UvrC both incises the 5' and 3' sides of the lesion. The N-terminal half is responsible for the 3' incision and the C-terminal half is responsible for the 5' incision. This chain is UvrABC system protein C, found in Shewanella sp. (strain ANA-3).